The sequence spans 264 residues: MVWLPRVPCVAAVILLLTVLSPPVALVRDSRPWFLEYCKSECHFYNGTQRVRFLKRYFYNLEENLRFDSDVGEFRAVTELGRPDAENWNSQPEILDEKRAAVDTYCRHNYEIFDNFLVPRRVEPTVTVYPTKTQPLEHHNLLVCSVSDFYPGNIEVRWFRNGKEEKTGIVSTGLVRNGDWTFQTLVMLETVPQSGEVYTCQVEHPSLTDPVTVEWKAQSTSAQNKMLSGVGGFVLGLLFLRAGLFIYFRNQKGQSGLQPTGLLS.

Residues 1–31 (MVWLPRVPCVAAVILLLTVLSPPVALVRDSR) form the signal peptide. Positions 32 to 121 (PWFLEYCKSE…IFDNFLVPRR (90 aa)) are beta-1. Residues 32–225 (PWFLEYCKSE…KAQSTSAQNK (194 aa)) are Extracellular-facing. 2 disulfide bridges follow: Cys-42–Cys-106 and Cys-144–Cys-200. A glycan (N-linked (GlcNAc...) asparagine) is linked at Asn-46. The tract at residues 122–215 (VEPTVTVYPT…SLTDPVTVEW (94 aa)) is beta-2. The 91-residue stretch at 124 to 214 (PTVTVYPTKT…PSLTDPVTVE (91 aa)) folds into the Ig-like C1-type domain. The segment at 216–225 (KAQSTSAQNK) is connecting peptide. The chain crosses the membrane as a helical span at residues 226 to 248 (MLSGVGGFVLGLLFLRAGLFIYF). Residues 249–264 (RNQKGQSGLQPTGLLS) are Cytoplasmic-facing.

Belongs to the MHC class II family. Ubiquitinated in immature dendritic cells leading to down-regulation of MHC class II.

The protein localises to the membrane. The protein is H-2 class II histocompatibility antigen, I-A beta chain (H2-Eb1) of Mus musculus (Mouse).